Reading from the N-terminus, the 532-residue chain is Neutral amino acid transporter A (532 aa).

M1 bears the N-acetylmethionine mark. The interval 1–29 (MEKSGETNGYLDGTQAEPAAGPRTPETAM) is disordered. Residues 1 to 41 (MEKSGETNGYLDGTQAEPAAGPRTPETAMGKSQRCASFFRR) lie on the Cytoplasmic side of the membrane. 3 helical membrane passes run 42–62 (HALV…GAAL), 88–108 (MIIL…LDAS), and 119–139 (AYFG…AFII). The Extracellular segment spans residues 140–216 (KPGAGAQTLQ…VTKEKIPVVT (77 aa)). 2 N-linked (GlcNAc...) asparagine glycosylation sites follow: N201 and N206. Helical transmembrane passes span 217–237 (DVEG…GVAL), 257–277 (ATMV…MFLI), 298–318 (IFAS…LVYF), 328–348 (FLLG…SSAT), 373–393 (IGAT…AVFI), and 418–438 (VGAA…LEAI). The disordered stretch occupies residues 495-532 (EAIPNSKSEEETSPLVTHQNPAGPVAIAPELESKESVL). A phosphoserine mark is found at S507, S527, and S530.

It belongs to the dicarboxylate/amino acid:cation symporter (DAACS) (TC 2.A.23) family. SLC1A4 subfamily.

The protein resides in the membrane. The protein localises to the melanosome. It carries out the reaction L-threonine(in) + Na(+)(in) = L-threonine(out) + Na(+)(out). It catalyses the reaction L-serine(in) + Na(+)(in) = L-serine(out) + Na(+)(out). The enzyme catalyses L-cysteine(in) + Na(+)(in) = L-cysteine(out) + Na(+)(out). The catalysed reaction is L-alanine(in) + Na(+)(in) = L-alanine(out) + Na(+)(out). It carries out the reaction L-proline(in) + Na(+)(in) = L-proline(out) + Na(+)(out). It catalyses the reaction 4-hydroxy-L-proline(in) + Na(+)(in) = 4-hydroxy-L-proline(out) + Na(+)(out). In terms of biological role, sodium-dependent neutral amino-acid transporter that mediates transport of alanine, serine, cysteine, proline, hydroxyproline and threonine. The polypeptide is Neutral amino acid transporter A (Slc1a4) (Mus musculus (Mouse)).